A 508-amino-acid chain; its full sequence is Maturase K (508 aa).

The protein belongs to the intron maturase 2 family. MatK subfamily.

The protein localises to the plastid. Its subcellular location is the chloroplast. Functionally, usually encoded in the trnK tRNA gene intron. Probably assists in splicing its own and other chloroplast group II introns. The sequence is that of Maturase K from Huidobria chilensis (Loasa chilensis).